A 142-amino-acid polypeptide reads, in one-letter code: Hemoglobin subunit epsilon (142 aa).

In terms of domain architecture, Globin spans 3–142; the sequence is HFTAEEKAAI…KLVSAVAIAL (140 aa). Serine 14 and serine 51 each carry phosphoserine. Histidine 64 and histidine 93 together coordinate heme b.

Belongs to the globin family. In terms of assembly, heterotetramer of two alpha chains and two epsilon chains in early embryonic hemoglobin Gower-2; two zeta chains and two epsilon chains in early embryonic hemoglobin Gower-1. Red blood cells.

Its function is as follows. The epsilon chain is a beta-type chain of early mammalian embryonic hemoglobin. In Callithrix geoffroyi (Geoffroy's marmoset), this protein is Hemoglobin subunit epsilon (HBE1).